Consider the following 335-residue polypeptide: tRNA N6-adenosine threonylcarbamoyltransferase (335 aa).

3 residues coordinate a divalent metal cation: histidine 109, histidine 113, and tyrosine 130. Substrate is bound by residues 130-134 (YVSGG), aspartate 162, glycine 177, glutamate 181, and asparagine 266. Aspartate 294 provides a ligand contact to a divalent metal cation.

It belongs to the KAE1 / TsaD family. In terms of assembly, component of the EKC/KEOPS complex composed of at least GON7, TP53RK, TPRKB, OSGEP and LAGE3; the whole complex dimerizes. Requires a divalent metal cation as cofactor.

It is found in the cytoplasm. The protein localises to the nucleus. It carries out the reaction L-threonylcarbamoyladenylate + adenosine(37) in tRNA = N(6)-L-threonylcarbamoyladenosine(37) in tRNA + AMP + H(+). Functionally, component of the EKC/KEOPS complex that is required for the formation of a threonylcarbamoyl group on adenosine at position 37 (t(6)A37) in tRNAs that read codons beginning with adenine. The complex is probably involved in the transfer of the threonylcarbamoyl moiety of threonylcarbamoyl-AMP (TC-AMP) to the N6 group of A37. OSGEP likely plays a direct catalytic role in this reaction, but requires other protein(s) of the complex to fulfill this activity. In Rattus norvegicus (Rat), this protein is tRNA N6-adenosine threonylcarbamoyltransferase (Osgep).